A 218-amino-acid polypeptide reads, in one-letter code: Glutathione S-transferase PM239X14 (218 aa).

The GST N-terminal domain occupies V2 to S85. Residues S12–T13, H41–K42, V55–I56, and E69–S70 contribute to the glutathione site. The 126-residue stretch at D93–M218 folds into the GST C-terminal domain.

It belongs to the GST superfamily. Phi family. Expressed in vegetative rosettes.

The protein resides in the cytoplasm. Its subcellular location is the cytosol. It carries out the reaction RX + glutathione = an S-substituted glutathione + a halide anion + H(+). In terms of biological role, specifically catalyzes the conjugation of synthetic 1-chloro-2,4-ditrobenzene to GSH. Also functions as a glutathione peroxidase, converting linoleate oxidation products into their corresponding hydroxyacids. This enzyme may thus serve to protect the cell from oxygen toxicity as well as from exogenous toxins such as herbicides. The sequence is that of Glutathione S-transferase PM239X14 from Arabidopsis thaliana (Mouse-ear cress).